Reading from the N-terminus, the 857-residue chain is MAFPAPAFSLANLLNGSYGVDTPEDVERLRSEQREEAAAACRNYRPLSAVDVSESVTEDAHSLQTPDGAPAEAVSDEFVTYGAEDYLEKSDDELLVAFETMVKPMRIGQLWCPAFNKCSFISSIAMARALLLAPRTSHRTMKCFEDLVAAIYTKSDFYYSEECEADDVQMDISSRDVPGYSFEPWSRTSGFEPPPICEACDMIMYQCPCFDFNALKKSCAERTFADDYVIEGLDGVVDNATLLSNLGPFLVPVKCQYEKCPTPPIAIPPNLNRATDRVDINLVQSICDSTLPTHSNYDDSFHQVFVESADYSIDLDHVRLRQSDLIAKIPDSGHMIPVLNTGSGHKRVGTTKEVLTAIKKRNADVPELGDSVNLSRLSKAVAERFFISYINGNSLASSNFVNVVSNFHDYMEKWKSSGLSYDDLPDLHAENLQFYDHMIKSDVKPVVSDTLNIDRPIPATITYHKKSITSQFSPLFTALFERFQRCLRERIILPVGKISSLEMAGFDVKNKYCLEIDLSKFDKSQGEFHLLIQEHILNGLGCPAPITKWWCDFHRFSYIRDRRAGVGMPISFQRRTGDAFTYFGNTIVTMAEFAWCYDTDQFEKLLFSGDDSLGFSLLPPVGDSSKFTTLYNMEAKVMEPSVPYICSKFLLSDEFGNTFSVPDPLREVQRLGTKKIPYSDNDEFLFAHFMSFVDRLKFLDRMSQSCIDQLSIFFELKYKKSGEEAALMLGAFKKYTANFQSYKELYYSDRHQCELINSFCSTEFRVERVNSNKQRKKYGIERRCDDKRRTPTGSYGGGEEAETKVSQTKSTGTRSQKSQRESAFESQTVPLPTVLSSGWSGTDRVVPPCERGGVTRA.

A RdRp catalytic domain is found at 511–624 (KYCLEIDLSK…FSLLPPVGDS (114 aa)). The span at 780-789 (IERRCDDKRR) shows a compositional bias: basic and acidic residues. The segment at 780-857 (IERRCDDKRR…PCERGGVTRA (78 aa)) is disordered. Composition is skewed to polar residues over residues 804 to 816 (KVSQ…TRSQ) and 824 to 840 (FESQ…SGWS).

Belongs to the ssRNA positive-strand viruses RNA-directed RNA polymerase family. In terms of assembly, interacts with replication protein 1a.

It carries out the reaction RNA(n) + a ribonucleoside 5'-triphosphate = RNA(n+1) + diphosphate. RNA-dependent RNA polymerase which replicates the viral genome composed of 3 RNA segments, RNA1, RNA2 and RNA3. The polypeptide is RNA-directed RNA polymerase 2a (Cucumber mosaic virus (strain MB-8) (CMV)).